The primary structure comprises 967 residues: Leucine--tRNA ligase (967 aa).

Residues 43–53 carry the 'HIGH' region motif; that stretch reads PYLSGHLHVGH. The 'KMSKS' region motif lies at 650–654; it reads KMSKS. ATP is bound at residue lysine 653.

Belongs to the class-I aminoacyl-tRNA synthetase family.

It localises to the cytoplasm. The enzyme catalyses tRNA(Leu) + L-leucine + ATP = L-leucyl-tRNA(Leu) + AMP + diphosphate. The sequence is that of Leucine--tRNA ligase from Thermococcus onnurineus (strain NA1).